The following is a 388-amino-acid chain: tRNA-specific adenosine deaminase 1 (388 aa).

Positions 63 to 388 constitute an A to I editase domain; the sequence is CLATGVKCTP…PNGGNEFQWI (326 aa). His89 lines the Zn(2+) pocket. Residue Glu91 is the Proton donor of the active site. Residue Arg96 coordinates 1D-myo-inositol hexakisphosphate. Zn(2+) is bound by residues Cys144 and Cys201. The 1D-myo-inositol hexakisphosphate site is built by Lys204, Lys357, and Arg363.

The protein belongs to the ADAT1 family. It depends on 1D-myo-inositol hexakisphosphate as a cofactor. Requires Zn(2+) as cofactor.

It localises to the cytoplasm. The protein resides in the nucleus. The enzyme catalyses adenosine(37) in tRNA(Ala) + H2O + H(+) = inosine(37) in tRNA(Ala) + NH4(+). Deaminates adenosine-37 to inosine in tRNA-Ala. In Schizosaccharomyces pombe (strain 972 / ATCC 24843) (Fission yeast), this protein is tRNA-specific adenosine deaminase 1.